We begin with the raw amino-acid sequence, 501 residues long: Glycerol kinase (501 aa).

ADP is bound at residue Thr12. ATP-binding residues include Thr12, Thr13, and Ser14. Residue Thr12 coordinates sn-glycerol 3-phosphate. Arg16 is an ADP binding site. Sn-glycerol 3-phosphate is bound by residues Arg82, Glu83, Tyr134, and Asp244. Glycerol-binding residues include Arg82, Glu83, Tyr134, Asp244, and Gln245. ADP-binding residues include Thr266 and Gly310. The ATP site is built by Thr266, Gly310, Gln314, and Gly411. Residues Gly411 and Asn415 each coordinate ADP.

Belongs to the FGGY kinase family.

The enzyme catalyses glycerol + ATP = sn-glycerol 3-phosphate + ADP + H(+). Its pathway is polyol metabolism; glycerol degradation via glycerol kinase pathway; sn-glycerol 3-phosphate from glycerol: step 1/1. Its activity is regulated as follows. Inhibited by fructose 1,6-bisphosphate (FBP). Functionally, key enzyme in the regulation of glycerol uptake and metabolism. Catalyzes the phosphorylation of glycerol to yield sn-glycerol 3-phosphate. The protein is Glycerol kinase of Methylobacterium radiotolerans (strain ATCC 27329 / DSM 1819 / JCM 2831 / NBRC 15690 / NCIMB 10815 / 0-1).